A 68-amino-acid polypeptide reads, in one-letter code: MAFLKKSLFLVLFLGLVSLSVCEEEKRESEEEKNEQEEDDRDERSEEKRLLGMIPLAISAISALSKLG.

Positions 1-22 (MAFLKKSLFLVLFLGLVSLSVC) are cleaved as a signal peptide. The propeptide occupies 23 to 49 (EEEKRESEEEKNEQEEDDRDERSEEKR). The tract at residues 24–46 (EEKRESEEEKNEQEEDDRDERSE) is disordered. Residues 31–41 (EEKNEQEEDDR) are compositionally biased toward acidic residues. Residue L67 is modified to Leucine amide.

It belongs to the frog skin active peptide (FSAP) family. Medusin subfamily. In terms of tissue distribution, expressed by the skin glands.

Its subcellular location is the secreted. Functionally, antimicrobial peptide active against Gram-positive bacteria and fungi but inactive against Gram-negative bacteria. Also inhibits growth of B.dendrobatidis zoospores at high concentrations. Shows anticancer activities. Shows hemolytic activity. This chain is Medusin-AS, found in Agalychnis spurrelli (Gliding leaf frog).